The chain runs to 233 residues: Orotidine 5'-phosphate decarboxylase (233 aa).

Substrate-binding positions include aspartate 11, lysine 33, 60 to 69 (DLKFHDIPNT), threonine 120, arginine 181, glutamine 190, glycine 210, and arginine 211. The active-site Proton donor is the lysine 62.

The protein belongs to the OMP decarboxylase family. Type 1 subfamily. In terms of assembly, homodimer.

It carries out the reaction orotidine 5'-phosphate + H(+) = UMP + CO2. The protein operates within pyrimidine metabolism; UMP biosynthesis via de novo pathway; UMP from orotate: step 2/2. In terms of biological role, catalyzes the decarboxylation of orotidine 5'-monophosphate (OMP) to uridine 5'-monophosphate (UMP). In Vibrio campbellii (strain ATCC BAA-1116), this protein is Orotidine 5'-phosphate decarboxylase.